The sequence spans 263 residues: Trem-like transcript 4 protein (263 aa).

Positions 1 to 28 (MAWRYSQLLLVPVQLVFLASVCCPGVWG) are cleaved as a signal peptide. The Ig-like V-type domain occupies 29–132 (STVSEELHRM…LREVTVLRNI (104 aa)). Topologically, residues 29–200 (STVSEELHRM…GWTSPGLLVS (172 aa)) are extracellular. The cysteines at positions 47 and 116 are disulfide-linked. Asn-100 is a glycosylation site (N-linked (GlcNAc...) asparagine). A disordered region spans residues 168 to 191 (SPEETTDSSINGTGHRNQSSSSPG). A helical membrane pass occupies residues 201-221 (VQYGLLLLKALMLSVFCVLLC). At 222-263 (WRSGQGREYMAETMELSKLPHISKSLDTVSHISGYEKKANWY) the chain is on the cytoplasmic side.

As to quaternary structure, interacts with TYROBP/DAP12. As to expression, predominantly expressed in spleen, with highest levels on selected populations of macrophages, including red pulp macrophages, and on subsets of dendritic cells (DC), mostly on CD8alpha(+) DC (at protein level). Also expressed on blood and spleen Ly6C(low) monocytes (at protein level). Not expressed on lymphocytes or granulocytes (at protein level).

Its subcellular location is the cell membrane. Its function is as follows. Positively regulates Toll-like receptor signaling via TLR7, TLR9 and TLR13 in neutrophils and splenic macrophages. Regulates TLR7 signaling by controlling ligand-induced recruitment of TLR7 from the endoplasmic reticulum to endosomes and lysosomes. Positively regulates Toll-like receptor TLR9-induced production of inflammatory cytokines but is dispensable for IFNB1 production. Involved in the anti-viral response to several viruses including influenza virus, vesicular stomatitis virus and cytomegalovirus. Binds to late apoptotic, and necrotic cells, but not living or early apoptotic cells, but is not essential for uptake of dying cells by dendritic cells (DCs). Does not bind nucleic acids. May participate in antigen presentation. The polypeptide is Trem-like transcript 4 protein (Treml4) (Mus musculus (Mouse)).